We begin with the raw amino-acid sequence, 103 residues long: Glutaredoxin-C11 (103 aa).

In terms of domain architecture, Glutaredoxin spans 1 to 102; the sequence is MERIRDLSSK…QMLKDAKAIW (102 aa). Residues Cys21 and Cys24 are joined by a disulfide bond.

The protein belongs to the glutaredoxin family. CC-type subfamily.

It localises to the cytoplasm. Functionally, has a glutathione-disulfide oxidoreductase activity in the presence of NADPH and glutathione reductase. Reduces low molecular weight disulfides and proteins. The protein is Glutaredoxin-C11 (GRXC11) of Arabidopsis thaliana (Mouse-ear cress).